Reading from the N-terminus, the 263-residue chain is MPEGPEIRRAADNLEAAIKGKPLTDVWFAFAQLKPYESQLTGQLVTRIETRGKALLTHFSNGLTLYSHNQLYGVWRVIDTGEIPQTTRILRVRLQTADKTILLYSASDIEMLTAEQLTTHPFLQRVGPDVLDARLTPEEVKARLLSPRFCNRQFSGLLLDQAFLAGLGNYLRVEILWQVGLTGQHKAKDLNEAQLNALSHALLDIPRLSYTTRGQADENKHHGALFRFKVFHRDGEACERCGGIIEKTTLSSRPFYWCPHCQK.

P2 functions as the Schiff-base intermediate with DNA in the catalytic mechanism. E3 acts as the Proton donor in catalysis. The Proton donor; for beta-elimination activity role is filled by K53. Positions 70, 125, and 169 each coordinate DNA. An FPG-type zinc finger spans residues K229–K263. R253 acts as the Proton donor; for delta-elimination activity in catalysis.

This sequence belongs to the FPG family. It depends on Zn(2+) as a cofactor.

The catalysed reaction is 2'-deoxyribonucleotide-(2'-deoxyribose 5'-phosphate)-2'-deoxyribonucleotide-DNA = a 3'-end 2'-deoxyribonucleotide-(2,3-dehydro-2,3-deoxyribose 5'-phosphate)-DNA + a 5'-end 5'-phospho-2'-deoxyribonucleoside-DNA + H(+). In terms of biological role, involved in base excision repair of DNA damaged by oxidation or by mutagenic agents. Acts as a DNA glycosylase that recognizes and removes damaged bases. Has a preference for oxidized pyrimidines, such as thymine glycol, 5,6-dihydrouracil and 5,6-dihydrothymine. Has AP (apurinic/apyrimidinic) lyase activity and introduces nicks in the DNA strand. Cleaves the DNA backbone by beta-delta elimination to generate a single-strand break at the site of the removed base with both 3'- and 5'-phosphates. This is Endonuclease 8 from Salmonella paratyphi B (strain ATCC BAA-1250 / SPB7).